We begin with the raw amino-acid sequence, 303 residues long: GTPase Era (303 aa).

Positions 7 to 176 (KSGFVAIIGR…LDNVVSHLDE (170 aa)) constitute an Era-type G domain. The segment at 15 to 22 (GRPNVGKS) is G1. 15-22 (GRPNVGKS) contacts GTP. The tract at residues 41 to 45 (QTTRN) is G2. A G3 region spans residues 62-65 (DTPG). GTP contacts are provided by residues 62 to 66 (DTPGV) and 125 to 128 (NKVD). Residues 125–128 (NKVD) are G4. Residues 155–157 (ISA) are G5. Residues 207–284 (TRQEVPHSVA…FLETWVKVEP (78 aa)) form the KH type-2 domain.

The protein belongs to the TRAFAC class TrmE-Era-EngA-EngB-Septin-like GTPase superfamily. Era GTPase family. As to quaternary structure, monomer.

Its subcellular location is the cytoplasm. The protein localises to the cell membrane. An essential GTPase that binds both GDP and GTP, with rapid nucleotide exchange. Plays a role in 16S rRNA processing and 30S ribosomal subunit biogenesis and possibly also in cell cycle regulation and energy metabolism. This Leuconostoc citreum (strain KM20) protein is GTPase Era.